Reading from the N-terminus, the 394-residue chain is NAD(P)H-quinone oxidoreductase subunit H (394 aa).

Belongs to the complex I 49 kDa subunit family. In terms of assembly, NDH-1 can be composed of about 15 different subunits; different subcomplexes with different compositions have been identified which probably have different functions.

The protein localises to the cellular thylakoid membrane. It carries out the reaction a plastoquinone + NADH + (n+1) H(+)(in) = a plastoquinol + NAD(+) + n H(+)(out). The enzyme catalyses a plastoquinone + NADPH + (n+1) H(+)(in) = a plastoquinol + NADP(+) + n H(+)(out). In terms of biological role, NDH-1 shuttles electrons from an unknown electron donor, via FMN and iron-sulfur (Fe-S) centers, to quinones in the respiratory and/or the photosynthetic chain. The immediate electron acceptor for the enzyme in this species is believed to be plastoquinone. Couples the redox reaction to proton translocation, and thus conserves the redox energy in a proton gradient. Cyanobacterial NDH-1 also plays a role in inorganic carbon-concentration. The sequence is that of NAD(P)H-quinone oxidoreductase subunit H from Prochlorococcus marinus (strain NATL2A).